The chain runs to 330 residues: Methionyl-tRNA formyltransferase (330 aa).

112–115 contacts (6S)-5,6,7,8-tetrahydrofolate; it reads SLLP.

This sequence belongs to the Fmt family.

The catalysed reaction is L-methionyl-tRNA(fMet) + (6R)-10-formyltetrahydrofolate = N-formyl-L-methionyl-tRNA(fMet) + (6S)-5,6,7,8-tetrahydrofolate + H(+). Functionally, attaches a formyl group to the free amino group of methionyl-tRNA(fMet). The formyl group appears to play a dual role in the initiator identity of N-formylmethionyl-tRNA by promoting its recognition by IF2 and preventing the misappropriation of this tRNA by the elongation apparatus. The protein is Methionyl-tRNA formyltransferase of Synechococcus sp. (strain RCC307).